The sequence spans 292 residues: Cyclin-dependent kinase A-2 (292 aa).

In terms of domain architecture, Protein kinase spans 4–286 (YEKVEKIGEG…ARAALEHEYF (283 aa)). ATP contacts are provided by residues 10–18 (IGEGTYGVV) and Lys33. Thr14 carries the post-translational modification Phosphothreonine. Tyr15 is modified (phosphotyrosine). Asp126 functions as the Proton acceptor in the catalytic mechanism. Thr160 carries the post-translational modification Phosphothreonine.

The protein belongs to the protein kinase superfamily. CMGC Ser/Thr protein kinase family. CDC2/CDKX subfamily. Expressed in the dividing region of the root apex and in differentiated cells such as those in the sclerenchyma, pericycle and parenchyma of the central cylinder. Expressed in the intercalary meristem and the elongation zone of internodes.

It catalyses the reaction L-seryl-[protein] + ATP = O-phospho-L-seryl-[protein] + ADP + H(+). It carries out the reaction L-threonyl-[protein] + ATP = O-phospho-L-threonyl-[protein] + ADP + H(+). The catalysed reaction is [DNA-directed RNA polymerase] + ATP = phospho-[DNA-directed RNA polymerase] + ADP + H(+). The chain is Cyclin-dependent kinase A-2 (CDKA-2) from Oryza sativa subsp. japonica (Rice).